The chain runs to 513 residues: ATP synthase subunit alpha (513 aa).

An ATP-binding site is contributed by 171-178; sequence GDRQIGKT.

This sequence belongs to the ATPase alpha/beta chains family. As to quaternary structure, F-type ATPases have 2 components, CF(1) - the catalytic core - and CF(0) - the membrane proton channel. CF(1) has five subunits: alpha(3), beta(3), gamma(1), delta(1), epsilon(1). CF(0) has three main subunits: a(1), b(2) and c(9-12). The alpha and beta chains form an alternating ring which encloses part of the gamma chain. CF(1) is attached to CF(0) by a central stalk formed by the gamma and epsilon chains, while a peripheral stalk is formed by the delta and b chains.

Its subcellular location is the cell membrane. The catalysed reaction is ATP + H2O + 4 H(+)(in) = ADP + phosphate + 5 H(+)(out). Functionally, produces ATP from ADP in the presence of a proton gradient across the membrane. The alpha chain is a regulatory subunit. The polypeptide is ATP synthase subunit alpha (Wolbachia pipientis wMel).